Consider the following 364-residue polypeptide: Fructose-bisphosphate aldolase B (364 aa).

Ala2 is subject to N-acetylalanine. At Lys13 the chain carries N6-succinyllysine. A Phosphoserine modification is found at Ser36. At Thr39 the chain carries Phosphothreonine. Arg43 provides a ligand contact to beta-D-fructose 1,6-bisphosphate. Phosphothreonine is present on Thr119. Lys121 is subject to N6-succinyllysine. Ser132 carries the phosphoserine modification. Catalysis depends on Glu188, which acts as the Proton acceptor. Residue Lys230 is the Schiff-base intermediate with dihydroxyacetone-P of the active site. Phosphoserine is present on residues Ser272, Ser276, Ser299, and Ser301. 272 to 274 provides a ligand contact to beta-D-fructose 1,6-bisphosphate; it reads SGG. Arg304 lines the beta-D-fructose 1,6-bisphosphate pocket. Phosphoserine is present on Ser309. Residue Lys317 is modified to N6-succinyllysine.

Belongs to the class I fructose-bisphosphate aldolase family. As to quaternary structure, homotetramer. Interacts with BBS1, BBS2, BBS4 and BBS7. Forms a ternary complex with G6PD and TP53; this interaction is direct.

Its subcellular location is the cytoplasm. It is found in the cytosol. The protein resides in the cytoskeleton. The protein localises to the microtubule organizing center. It localises to the centrosome. Its subcellular location is the centriolar satellite. It catalyses the reaction beta-D-fructose 1,6-bisphosphate = D-glyceraldehyde 3-phosphate + dihydroxyacetone phosphate. It carries out the reaction beta-D-fructose 1-phosphate = D-glyceraldehyde + dihydroxyacetone phosphate. It participates in carbohydrate degradation; glycolysis; D-glyceraldehyde 3-phosphate and glycerone phosphate from D-glucose: step 4/4. Its pathway is carbohydrate biosynthesis; gluconeogenesis. The protein operates within carbohydrate metabolism; fructose metabolism. Catalyzes the aldol cleavage of fructose 1,6-biphosphate to form two triosephosphates dihydroxyacetone phosphate and D-glyceraldehyde 3-phosphate in glycolysis as well as the reverse stereospecific aldol addition reaction in gluconeogenesis. In fructolysis, metabolizes fructose 1-phosphate derived from the phosphorylation of dietary fructose by fructokinase into dihydroxyacetone phosphate and D-glyceraldehyde. Acts as an adapter independently of its enzymatic activity, exerts a tumor suppressor role by stabilizing the ternary complex with G6PD and TP53 to inhibit G6PD activity and keep oxidative pentose phosphate metabolism in check. The chain is Fructose-bisphosphate aldolase B (ALDOB) from Ovis aries (Sheep).